We begin with the raw amino-acid sequence, 286 residues long: Pyridoxal kinase PdxY (286 aa).

Substrate contacts are provided by residues S9 and 44-45 (TQ). The ATP site is built by D111, E148, and K181. Substrate is bound at residue D222.

This sequence belongs to the pyridoxine kinase family. PdxY subfamily. As to quaternary structure, homodimer. Mg(2+) serves as cofactor.

The enzyme catalyses pyridoxal + ATP = pyridoxal 5'-phosphate + ADP + H(+). It functions in the pathway cofactor metabolism; pyridoxal 5'-phosphate salvage; pyridoxal 5'-phosphate from pyridoxal: step 1/1. Pyridoxal kinase involved in the salvage pathway of pyridoxal 5'-phosphate (PLP). Catalyzes the phosphorylation of pyridoxal to PLP. The polypeptide is Pyridoxal kinase PdxY (Actinobacillus pleuropneumoniae serotype 5b (strain L20)).